Here is a 436-residue protein sequence, read N- to C-terminus: Amino acid transporter AVT3C (436 aa).

Over residues 1–13 (MGFQNEASSSSYT) the composition is skewed to polar residues. Residues 1–21 (MGFQNEASSSSYTLKIPPPAR) form a disordered region. Residues 1 to 38 (MGFQNEASSSSYTLKIPPPAREDSPLLGKGPPLSSQFK) lie on the Cytoplasmic side of the membrane. The chain crosses the membrane as a helical span at residues 39 to 59 (TFANVFIAVVGAGVLGLPYAF). Topologically, residues 60–65 (KRTGWL) are vacuolar. Residues 66–86 (MGVLLLVSVSVLTHHCMMLLV) traverse the membrane as a helical segment. Over 87 to 118 (YTRRKLDSFNAGISKIGSFGDLGFAVCGSLGR) the chain is Cytoplasmic. A helical membrane pass occupies residues 119 to 139 (IVVDLFIILSQAGFCVGYLIF). The Vacuolar portion of the chain corresponds to 140–166 (IGTTLANLSDPESPTSLRHQFTRLGSE). A helical transmembrane segment spans residues 167 to 187 (FLGVSSKSLYIWGCFPFQLGL). At 188-195 (NSIKTLTH) the chain is on the cytoplasmic side. Residues 196-216 (LAPLSIFADIVDLGAMAVVIV) form a helical membrane-spanning segment. Over 217-228 (EDSMIILKQRPD) the chain is Vacuolar. The helical transmembrane segment at 229–249 (VVAFGGMSLFLYGMGVAVYSF) threads the bilayer. The Cytoplasmic segment spans residues 250-273 (EGVGMVLPLESEMKDKDKFGKVLA). A helical membrane pass occupies residues 274-294 (LGMGFISLIYIAFGILGYLAF). The Vacuolar portion of the chain corresponds to 295–309 (GEDTMDIITANLGAG). Residues 310–330 (LVSTVVQLGLCINLFFTFPLM) form a helical membrane-spanning segment. The Cytoplasmic portion of the chain corresponds to 331-352 (MNPVFEIVERRFSRGMYSAWLR). The chain crosses the membrane as a helical span at residues 353–373 (WVLVLAVTLVALFVPNFADFL). Residues 374–376 (SLV) lie on the Vacuolar side of the membrane. Residues 377-397 (GSSTCCVLGFVLPALFHLLVF) form a helical membrane-spanning segment. At 398 to 411 (KEEMGWLQWSSDTA) the chain is on the cytoplasmic side. The helical transmembrane segment at 412 to 432 (IVVLGVVLAVSGTWSSLSEIF) threads the bilayer. At 433 to 436 (SVKV) the chain is on the vacuolar side.

The protein belongs to the amino acid/polyamine transporter 2 family. Amino acid/auxin permease (AAAP) (TC 2.A.18.8) subfamily. As to expression, ubiquitous.

It is found in the vacuole membrane. Translocates preferentially neutral amino acids from the vacuole to the cytoplasm. The polypeptide is Amino acid transporter AVT3C (Arabidopsis thaliana (Mouse-ear cress)).